A 451-amino-acid polypeptide reads, in one-letter code: Vacuolar cation/proton exchanger 1a (451 aa).

Residues 1–58 lie on the Cytoplasmic side of the membrane; that stretch reads MEAAAAMEAGRKLAARHPHGRSRTAHNMSSSSLRKKSDAALVRKVPVAPLRPLLANLQ. The tract at residues 9-37 is disordered; it reads AGRKLAARHPHGRSRTAHNMSSSSLRKKS. Over residues 13–24 the composition is skewed to basic residues; that stretch reads LAARHPHGRSRT. A helical membrane pass occupies residues 59–79; it reads EVFLATKLAVLFPAVPLAIAA. Topologically, residues 80–86 are vacuolar; that stretch reads QCFRFDQ. The chain crosses the membrane as a helical span at residues 87–107; it reads VWVFALSLLGLIPLAERVSFL. Residues 108–120 are Cytoplasmic-facing; the sequence is TEQIALYTGPTVG. A helical transmembrane segment spans residues 121–141; sequence GLLNATCGNATELIIALFALL. The segment at 128-163 is cation selection; it reads GNATELIIALFALLKGKIEVVKCSLLGSVLSNLLLV. At 142-153 the chain is on the vacuolar side; the sequence is KGKIEVVKCSLL. Residues 154-174 traverse the membrane as a helical segment; the sequence is GSVLSNLLLVLGTSLFCGGVV. Residues 175–191 are Cytoplasmic-facing; that stretch reads NLGARQPYDRNQSDVST. Residues 192-212 traverse the membrane as a helical segment; it reads ALLFLAVLCHSAPLLLRYAVA. The Vacuolar portion of the chain corresponds to 213–228; the sequence is AGEHSVSATSAAASLD. Residues 229 to 249 traverse the membrane as a helical segment; it reads LSRACSFVMLASYVAYLFFQL. Topologically, residues 250–273 are cytoplasmic; it reads KTHRQLFEPQEVDGGDAGDDDEEP. The chain crosses the membrane as a helical span at residues 274–294; it reads ALGFASALFWLALMTAVISVL. Over 295–317 the chain is Vacuolar; the sequence is SEYVVGTIEPTSQSWGLSVSFIS. The chain crosses the membrane as a helical span at residues 318–338; that stretch reads IILLPIVGNAAEHAGAIIFAL. Residues 325 to 360 form a cation selection region; that stretch reads GNAAEHAGAIIFALKNKLDITLGVALGSATQISMFV. Topologically, residues 339–352 are cytoplasmic; it reads KNKLDITLGVALGS. Residues 353–373 traverse the membrane as a helical segment; sequence ATQISMFVVPLSVLVAWIMGV. Topologically, residues 374-378 are vacuolar; it reads QMDLD. A helical transmembrane segment spans residues 379 to 399; sequence FKLLETGSLFMAVLVTAFTLQ. Topologically, residues 400–404 are cytoplasmic; sequence DGTSH. The chain crosses the membrane as a helical span at residues 405-425; that stretch reads YLKGILLLLCYIVIGACFFVA. At 426 to 451 the chain is on the vacuolar side; that stretch reads RQPAGHANSNGALLDVPTGSMSVQAA.

The protein belongs to the Ca(2+):cation antiporter (CaCA) (TC 2.A.19) family. Cation/proton exchanger (CAX) subfamily. Ubiquitous.

Its subcellular location is the vacuole membrane. Functionally, vacuolar cation/proton exchanger (CAX). Translocates Ca(2+) and other metal ions into vacuoles using the proton gradient formed by H(+)-ATPase and H(+)-pyrophosphatase. This Oryza sativa subsp. japonica (Rice) protein is Vacuolar cation/proton exchanger 1a (CAX1a).